The primary structure comprises 228 residues: Endolytic peptidoglycan transglycosylase RlpA (228 aa).

Residues 1-23 (MIQRHKLIVLIFLLIFCLSGCNT) form the signal peptide.

This sequence belongs to the RlpA family.

Lytic transglycosylase with a strong preference for naked glycan strands that lack stem peptides. In Rickettsia felis (strain ATCC VR-1525 / URRWXCal2) (Rickettsia azadi), this protein is Endolytic peptidoglycan transglycosylase RlpA.